We begin with the raw amino-acid sequence, 1188 residues long: NF-X1-type zinc finger protein NFXL1 (1188 aa).

Residues 1–15 show a composition bias toward basic and acidic residues; the sequence is MSFQVRRDRSDDRSH. Disordered stretches follow at residues 1 to 52 and 65 to 195; these read MSFQ…ETLD and QHNA…VAKE. Composition is skewed to polar residues over residues 19–34 and 168–186; these read HQQT…SSVV and ASGT…TRPV. The segment at 223-279 adopts an RING-type; degenerate zinc-finger fold; it reads CMICYDKVGRSANIWSCSSCYSIFHINCIKRWARAPTSVDLLAEKNQGDNWRCPGCQ. 9 consecutive NF-X1-type zinc fingers follow at residues 335–353, 390–409, 454–473, 513–532, 572–607, 611–630, 668–686, 721–751, and 760–781; these read CPHV…PCKA, CGRH…PCQV, CGNH…DCDL, CRLH…PCLV, CGRH…PCQK, CGQH…PCLE, CGHS…PCST, CGMH…TCRQ, and CRHT…RCEF. An R3H domain is found at 894-963; that stretch reads PKWVLAVEER…KRFTVVHVTA (70 aa). Residues 1100–1188 are disordered; that stretch reads SDDSWGAEDS…VVDDWEKVCE (89 aa). Polar residues-rich tracts occupy residues 1126 to 1138 and 1159 to 1169; these read AKSN…SVNR and EESSSSKTTGK.

Belongs to the NFX1 family. Expressed in seedlings, roots, stems, leaves, buds, flowers and siliques.

The protein resides in the nucleus. The protein operates within protein modification; protein ubiquitination. Functionally, mediates E2-dependent ubiquitination. Confers resistance to osmotic stress such as high salinity. Promotes H(2)O(2) production. Negative regulator of some defense-related genes via an salicylic acid (SA)-dependent signaling pathway. Confers susceptibility to the compatible phytopathogen Pseudomonas syringae pv. tomato strain DC3000 (Pst DC3000). Mediates resistance to type A trichothecenes (phytotoxins produced by phytopathogenic fungi). This is NF-X1-type zinc finger protein NFXL1 (NFXL1) from Arabidopsis thaliana (Mouse-ear cress).